The chain runs to 294 residues: Pyrroline-5-carboxylate reductase (294 aa).

This sequence belongs to the pyrroline-5-carboxylate reductase family.

Its subcellular location is the cytoplasm. It carries out the reaction L-proline + NADP(+) = (S)-1-pyrroline-5-carboxylate + NADPH + 2 H(+). The enzyme catalyses L-proline + NAD(+) = (S)-1-pyrroline-5-carboxylate + NADH + 2 H(+). It functions in the pathway amino-acid biosynthesis; L-proline biosynthesis; L-proline from L-glutamate 5-semialdehyde: step 1/1. Its function is as follows. Catalyzes the reduction of 1-pyrroline-5-carboxylate (PCA) to L-proline. The chain is Pyrroline-5-carboxylate reductase from Mycobacterium leprae (strain TN).